The chain runs to 750 residues: Cation-transporting P-type ATPase B (750 aa).

Residues 17–80 form the HMA domain; the sequence is RRIQLDVAGM…VIEQAGYRAT (64 aa). The a metal cation site is built by Cys-28 and Cys-31. The next 6 helical transmembrane spans lie at 104-124, 129-149, 167-187, 200-220, 360-380, and 389-409; these read LIVA…FAIV, FPGW…WAAW, ETLI…TIFV, AILH…VFVL, IAAV…ASWL, and AFSV…GLAT. The active-site 4-aspartylphosphate intermediate is Asp-445. 6 consecutive transmembrane segments (helical) span residues 471-491, 500-520, 547-567, 663-683, 693-713, and 715-735; these read VLAL…TAIV, VADF…EHHV, SRGE…AVAI, VAIG…VPVA, TIRI…PIAS, and GLLN…FVVS.

Belongs to the cation transport ATPase (P-type) (TC 3.A.3) family. Type IB subfamily.

The protein resides in the cell membrane. It carries out the reaction ATP + H2O = ADP + phosphate + H(+). In Mycobacterium leprae (strain TN), this protein is Cation-transporting P-type ATPase B (ctpB).